Consider the following 443-residue polypeptide: Omega-6 fatty acid desaturase, chloroplastic (443 aa).

The transit peptide at Met-1 to Ala-64 directs the protein to the chloroplast. The Histidine box-1 signature appears at His-166–His-170. The Histidine box-2 motif lies at His-202 to His-206. Positions His-362–His-366 match the Histidine box-3 motif.

The protein belongs to the fatty acid desaturase type 1 family.

It is found in the plastid. The protein localises to the chloroplast membrane. It catalyses the reaction a (9Z)-octadecenoyl-containing glycerolipid + 2 reduced [2Fe-2S]-[ferredoxin] + O2 + 2 H(+) = a (9Z,12Z)-octadecadienoyl-containing glycerolipid + 2 oxidized [2Fe-2S]-[ferredoxin] + 2 H2O. It participates in lipid metabolism; polyunsaturated fatty acid biosynthesis. In terms of biological role, chloroplast omega-6 fatty acid desaturase introduces the second double bond in the biosynthesis of 16:3 and 18:3 fatty acids, important constituents of plant membranes. It is thought to use ferredoxin as an electron donor and to act on fatty acids esterified to galactolipids, sulfolipids and phosphatidylglycerol. This chain is Omega-6 fatty acid desaturase, chloroplastic, found in Brassica napus (Rape).